The sequence spans 253 residues: GTP cyclohydrolase 1 type 2 homolog (253 aa).

A divalent metal cation-binding residues include His-64, His-65, Asp-101, His-222, and Glu-226.

Belongs to the GTP cyclohydrolase I type 2/NIF3 family. In terms of assembly, homohexamer.

The polypeptide is GTP cyclohydrolase 1 type 2 homolog (Halobacterium salinarum (strain ATCC 700922 / JCM 11081 / NRC-1) (Halobacterium halobium)).